The following is a 239-amino-acid chain: Demethylmenaquinone methyltransferase (239 aa).

S-adenosyl-L-methionine contacts are provided by residues T60, D81, and 106 to 107; that span reads DA.

This sequence belongs to the class I-like SAM-binding methyltransferase superfamily. MenG/UbiE family.

The enzyme catalyses a 2-demethylmenaquinol + S-adenosyl-L-methionine = a menaquinol + S-adenosyl-L-homocysteine + H(+). It functions in the pathway quinol/quinone metabolism; menaquinone biosynthesis; menaquinol from 1,4-dihydroxy-2-naphthoate: step 2/2. Its function is as follows. Methyltransferase required for the conversion of demethylmenaquinol (DMKH2) to menaquinol (MKH2). The chain is Demethylmenaquinone methyltransferase from Staphylococcus haemolyticus (strain JCSC1435).